A 169-amino-acid polypeptide reads, in one-letter code: MLESVLHALHLNETFLAMLISFLILVFILQQVAFKPILKALDERRQKVEESISRAENDLEEANRMRAENAAELAKARQEAHDLIARATKVGEEKAQEIVAAAQAEANRLKEKAVADIQREKEKALEELRSHVVNLSILAAEKVIRKNLDEPTQRQLVDEVINEVGKLPC.

Residues 14–34 (TFLAMLISFLILVFILQQVAF) form a helical membrane-spanning segment.

This sequence belongs to the ATPase B chain family. In terms of assembly, F-type ATPases have 2 components, F(1) - the catalytic core - and F(0) - the membrane proton channel. F(1) has five subunits: alpha(3), beta(3), gamma(1), delta(1), epsilon(1). F(0) has four main subunits: a(1), b(2) and c(10-14). The alpha and beta chains form an alternating ring which encloses part of the gamma chain. F(1) is attached to F(0) by a central stalk formed by the gamma and epsilon chains, while a peripheral stalk is formed by the delta and b chains.

It is found in the cell membrane. In terms of biological role, f(1)F(0) ATP synthase produces ATP from ADP in the presence of a proton or sodium gradient. F-type ATPases consist of two structural domains, F(1) containing the extramembraneous catalytic core and F(0) containing the membrane proton channel, linked together by a central stalk and a peripheral stalk. During catalysis, ATP synthesis in the catalytic domain of F(1) is coupled via a rotary mechanism of the central stalk subunits to proton translocation. Its function is as follows. Component of the F(0) channel, it forms part of the peripheral stalk, linking F(1) to F(0). This Heliobacterium modesticaldum (strain ATCC 51547 / Ice1) protein is ATP synthase subunit b.